We begin with the raw amino-acid sequence, 1796 residues long: U3 small nucleolar RNA-associated protein 10 (1796 aa).

12 HEAT repeats span residues 586-623 (LDLQ…SNAE), 656-692 (LLQE…SATG), 861-898 (DLTT…SDHS), 983-1021 (DTSV…TAPD), 1052-1089 (QTIK…AYEH), 1161-1198 (QPKP…VLSS), 1258-1295 (LSIG…QESN), 1302-1340 (TVLL…KYGK), 1344-1383 (EAVA…VLQD), 1492-1529 (SAVE…SALD), 1711-1748 (DHRK…TLGE), and 1752-1789 (EMLS…ILGE). The segment at 881–901 (TTDSPATKRRRTSSSDHSRGV) is disordered.

The protein belongs to the HEATR1/UTP10 family. As to quaternary structure, component of the ribosomal small subunit (SSU) processome.

The protein resides in the nucleus. The protein localises to the nucleolus. Involved in nucleolar processing of pre-18S ribosomal RNA. Involved in ribosome biosynthesis. The chain is U3 small nucleolar RNA-associated protein 10 from Pyricularia oryzae (strain 70-15 / ATCC MYA-4617 / FGSC 8958) (Rice blast fungus).